The following is a 313-amino-acid chain: Foldase protein PrsA (313 aa).

An N-terminal signal peptide occupies residues methionine 1 to alanine 20. A lipid anchor (N-palmitoyl cysteine) is attached at cysteine 21. The S-diacylglycerol cysteine moiety is linked to residue cysteine 21. Positions threonine 143–lysine 241 constitute a PpiC domain.

It belongs to the PrsA family.

The protein resides in the cell membrane. The enzyme catalyses [protein]-peptidylproline (omega=180) = [protein]-peptidylproline (omega=0). Its function is as follows. Plays a major role in protein secretion by helping the post-translocational extracellular folding of several secreted proteins. This chain is Foldase protein PrsA, found in Streptococcus pneumoniae (strain P1031).